A 776-amino-acid chain; its full sequence is Reticulon-1 (776 aa).

Disordered stretches follow at residues 1–101, 137–168, 205–245, and 285–580; these read MAAP…KDGE, SESP…DSGI, VKHQ…PAPV, and LTEI…APPP. Ser327 carries the phosphoserine modification. Over residues 328 to 341 the composition is skewed to low complexity; that stretch reads PGSITPPSSGTEPS. A phosphoserine mark is found at Ser350, Ser352, and Ser487. The segment covering 497–511 has biased composition (basic and acidic residues); that stretch reads AIREETGVRAEERAP. One can recognise a Reticulon domain in the interval 589–776; it reads AIDLLYWRDI…KIPGAKRHAE (188 aa). The next 2 membrane-spanning stretches (helical) occupy residues 603–623 and 705–725; these read IVFG…VVSV and FAVL…LTLL.

As to quaternary structure, interacts with NDRG1. Interacts with BACE1. In terms of assembly, interacts with TMEM33. Interacts with UGCG; regulates the ceramide glucosyltransferase activity of UGCG. In terms of processing, isoforms RTN1-A and RTN1-B are phosphorylated. As to expression, expressed in neural and neuroendocrine tissues and cell cultures derived therefrom. Expression of isoform RTN1-C is strongly correlated with neuronal differentiation.

The protein resides in the endoplasmic reticulum membrane. It is found in the golgi apparatus membrane. Inhibits amyloid precursor protein processing, probably by blocking BACE1 activity. The polypeptide is Reticulon-1 (RTN1) (Homo sapiens (Human)).